A 340-amino-acid chain; its full sequence is UPF0284 protein Saci_0020 (340 aa).

Belongs to the UPF0284 family.

The polypeptide is UPF0284 protein Saci_0020 (Sulfolobus acidocaldarius (strain ATCC 33909 / DSM 639 / JCM 8929 / NBRC 15157 / NCIMB 11770)).